Consider the following 139-residue polypeptide: Natriuretic peptide Mf-NP (139 aa).

An N-terminal signal peptide occupies residues 1–25 (MVGLSRLTGGGLLLVLALLPLALDG). A propeptide spanning residues 26–75 (KPLEEAPTAPSRIIPFSRPVRKESQAVLDPMVHPERPAGSGDDGDLSRLE) is cleaved from the precursor. Cys86 and Cys102 are disulfide-bonded. A propeptide spanning residues 117-139 (IIPFSRPVRKESRAALDRMQHPG) is cleaved from the precursor.

Belongs to the natriuretic peptide family. Expressed by the venom gland.

It localises to the secreted. In terms of biological role, natriuretic peptide that dose-dependently induces the rapid relaxation of rat aortic strips phenylephrine-precontracted. Acts by stimulating cGMP production in a dose-dependent manner (by probably activating NPR1 and/or NPR2). May also show potent hypotensive effects. This Micrurus fulvius (Eastern coral snake) protein is Natriuretic peptide Mf-NP.